Here is an 81-residue protein sequence, read N- to C-terminus: Putative membrane protein insertion efficiency factor (81 aa).

The segment at 61 to 81 (NDGGFDPVPPAPSSRTSSIAE) is disordered.

The protein belongs to the UPF0161 family.

The protein localises to the cell inner membrane. Could be involved in insertion of integral membrane proteins into the membrane. The protein is Putative membrane protein insertion efficiency factor of Pseudomonas entomophila (strain L48).